We begin with the raw amino-acid sequence, 190 residues long: uncharacterized protein (190 aa).

The first 28 residues, 1–28 (MEFSLQYITIFIFVILFLIGLFSSKSRS), serve as a signal peptide directing secretion.

This is an uncharacterized protein from Haemophilus influenzae (strain ATCC 51907 / DSM 11121 / KW20 / Rd).